The following is a 273-amino-acid chain: MKKATQSKAWTTVQIARHPERPQFLDYVGEIFTEFDALHGDRLFGDDGAMVGGLARFDGQPVMVIGQHRGRSTREKLKHNFGMCNPEGYRKSQRLLDMAERFNLPVFTFIDTMGAYPGVGAEERGQAEAIATSLAQLSSLKVPVIATVLGEGGSGGALGIGVADRVIMLSHSIYSVISPEGCASILWKTAEKAAQASEALGLTADKLQSLGIVEYVVDEGEGAHLDPERVMQNLKVVLKQALDELLPMDANERCEARYQRLMKFGSENLGMAS.

A CoA carboxyltransferase C-terminal domain is found at 1-244; the sequence is MKKATQSKAW…KVVLKQALDE (244 aa).

The protein belongs to the AccA family. Acetyl-CoA carboxylase is a heterohexamer composed of biotin carboxyl carrier protein (AccB), biotin carboxylase (AccC) and two subunits each of ACCase subunit alpha (AccA) and ACCase subunit beta (AccD).

The protein localises to the cytoplasm. The enzyme catalyses N(6)-carboxybiotinyl-L-lysyl-[protein] + acetyl-CoA = N(6)-biotinyl-L-lysyl-[protein] + malonyl-CoA. Its pathway is lipid metabolism; malonyl-CoA biosynthesis; malonyl-CoA from acetyl-CoA: step 1/1. In terms of biological role, component of the acetyl coenzyme A carboxylase (ACC) complex. First, biotin carboxylase catalyzes the carboxylation of biotin on its carrier protein (BCCP) and then the CO(2) group is transferred by the carboxyltransferase to acetyl-CoA to form malonyl-CoA. The sequence is that of Acetyl-coenzyme A carboxylase carboxyl transferase subunit alpha from Acinetobacter baumannii (strain AB0057).